The primary structure comprises 159 residues: Small ribosomal subunit protein uS4 (159 aa).

One can recognise an S4 RNA-binding domain in the interval 106-158 (RRLQTIVYRKGLAKSIYHARQLVVHGHVAVAGRRVTSPGFLVPRDLEDKITLI).

This sequence belongs to the universal ribosomal protein uS4 family. Part of the 30S ribosomal subunit. Contacts protein S5. The interaction surface between S4 and S5 is involved in control of translational fidelity.

In terms of biological role, one of the primary rRNA binding proteins, it binds directly to 16S rRNA where it nucleates assembly of the body of the 30S subunit. Its function is as follows. With S5 and S12 plays an important role in translational accuracy. The sequence is that of Small ribosomal subunit protein uS4 from Pyrobaculum islandicum (strain DSM 4184 / JCM 9189 / GEO3).